Consider the following 451-residue polypeptide: Heat shock factor protein (451 aa).

A DNA-binding region spans residues 12 to 117 (VPAFLAKLWT…LLENIKRKVN (106 aa)). Disordered stretches follow at residues 210-273 (LNDS…LEAS) and 285-307 (LTPS…PISP). Over residues 232–246 (PSSTSYPVSGFTDSS) the composition is skewed to polar residues.

Belongs to the HSF family. In terms of assembly, homotrimer. Exhibits temperature-dependent phosphorylation.

It localises to the nucleus. In terms of biological role, DNA-binding protein that specifically binds heat shock promoter elements (HSE) and activates transcription. This Xenopus laevis (African clawed frog) protein is Heat shock factor protein (hsf1).